We begin with the raw amino-acid sequence, 86 residues long: Small ribosomal subunit protein bS16 (86 aa).

Belongs to the bacterial ribosomal protein bS16 family.

The sequence is that of Small ribosomal subunit protein bS16 from Xylella fastidiosa (strain M23).